The following is a 113-amino-acid chain: MRHYEITLIVHPDQSAQVGTMMDKYKEIINADGGKIHKEEDWGRKHLAYPIKKIYKAHYLMMNIECDQEMLDKLNYNFRFNDAILRSLIISKNKAITTPSIMMVNKDKEKGKS.

It belongs to the bacterial ribosomal protein bS6 family.

Functionally, binds together with bS18 to 16S ribosomal RNA. In Vesicomyosocius okutanii subsp. Calyptogena okutanii (strain HA), this protein is Small ribosomal subunit protein bS6.